The following is a 407-amino-acid chain: Mitochondrial protein import protein mas5 (407 aa).

One can recognise a J domain in the interval 6–68 (KLYEVLNVDV…EKRATYDRFG (63 aa)). Residues leucine 110 and 129 to 131 (LAL) contribute to the substrate site. The segment at 124 to 207 (GKTTKLALQK…CDGAKVISQR (84 aa)) adopts a CR-type zinc-finger fold. The Zn(2+) site is built by cysteine 137, cysteine 140, cysteine 153, cysteine 156, cysteine 179, cysteine 182, cysteine 195, and cysteine 198. 4 CXXCXGXG motif repeats span residues 137–144 (CPKCSGRG), 153–160 (CASCNGSG), 179–186 (CPDCNGAG), and 195–202 (CKECDGAK). Substrate contacts are provided by residues 209-210 (IL) and 241-243 (VIF). The tract at residues 375-407 (VRIDNNVDPTTATSMDEDEDEEGGHPGVQCAQQ) is disordered. A Cysteine methyl ester modification is found at cysteine 404. Cysteine 404 is lipidated: S-farnesyl cysteine. Positions 405–407 (AQQ) are cleaved as a propeptide — removed in mature form.

Homodimer.

It is found in the cytoplasm. The protein resides in the nucleus. Its function is as follows. Probably involved in mitochondrial protein import. Plays a role in microtubule cytoskeleton organization. The sequence is that of Mitochondrial protein import protein mas5 (mas5) from Schizosaccharomyces pombe (strain 972 / ATCC 24843) (Fission yeast).